The following is a 503-amino-acid chain: Cobyric acid synthase (503 aa).

A GATase cobBQ-type domain is found at Ala-255–Phe-444. Catalysis depends on Cys-337, which acts as the Nucleophile. Residue His-436 is part of the active site.

It belongs to the CobB/CobQ family. CobQ subfamily.

It functions in the pathway cofactor biosynthesis; adenosylcobalamin biosynthesis. Catalyzes amidations at positions B, D, E, and G on adenosylcobyrinic A,C-diamide. NH(2) groups are provided by glutamine, and one molecule of ATP is hydrogenolyzed for each amidation. In Geobacillus kaustophilus (strain HTA426), this protein is Cobyric acid synthase.